Consider the following 882-residue polypeptide: Valine--tRNA ligase (882 aa).

The 'HIGH' region signature appears at 45–55 (PNVTGSLHIGH). The 'KMSKS' region signature appears at 525 to 529 (KFSKS). ATP is bound at residue Lys528. Positions 812–881 (EGLIDVAKEK…VLKKGIQNLA (70 aa)) form a coiled coil.

It belongs to the class-I aminoacyl-tRNA synthetase family. ValS type 1 subfamily. In terms of assembly, monomer.

It is found in the cytoplasm. It catalyses the reaction tRNA(Val) + L-valine + ATP = L-valyl-tRNA(Val) + AMP + diphosphate. In terms of biological role, catalyzes the attachment of valine to tRNA(Val). As ValRS can inadvertently accommodate and process structurally similar amino acids such as threonine, to avoid such errors, it has a 'posttransfer' editing activity that hydrolyzes mischarged Thr-tRNA(Val) in a tRNA-dependent manner. The polypeptide is Valine--tRNA ligase (Leptospira interrogans serogroup Icterohaemorrhagiae serovar Lai (strain 56601)).